The following is a 268-amino-acid chain: E3 ubiquitin-protein ligase IAP-3 (268 aa).

2 BIR repeats span residues 18 to 84 and 111 to 178; these read KAAR…CPFV and EAAR…CEYV. Zn(2+) contacts are provided by Cys148, Cys151, His168, and Cys175. The segment at 221–256 adopts an RING-type zinc-finger fold; it reads CKICLGAEKTVCFVPCGHVVACGKCAAGVTTCPVCR.

The protein belongs to the IAP family. In terms of processing, auto-ubiquitinated.

The catalysed reaction is S-ubiquitinyl-[E2 ubiquitin-conjugating enzyme]-L-cysteine + [acceptor protein]-L-lysine = [E2 ubiquitin-conjugating enzyme]-L-cysteine + N(6)-ubiquitinyl-[acceptor protein]-L-lysine.. RING-finger E3 ubiquitin ligase required to prevent cellular apoptosis in infected cells. Ubiquitinates and subsequently targets host pro-apoptotic cellular proteins such as HID for degradation by the proteasome. The sequence is that of E3 ubiquitin-protein ligase IAP-3 (IAP3) from Orgyia pseudotsugata multicapsid polyhedrosis virus (OpMNPV).